The sequence spans 149 residues: Nucleoside diphosphate kinase (149 aa).

6 residues coordinate ATP: K9, F57, R85, T91, R102, and N112. H115 acts as the Pros-phosphohistidine intermediate in catalysis.

It belongs to the NDK family. In terms of assembly, homotetramer. Mg(2+) is required as a cofactor.

The protein resides in the cytoplasm. The enzyme catalyses a 2'-deoxyribonucleoside 5'-diphosphate + ATP = a 2'-deoxyribonucleoside 5'-triphosphate + ADP. It catalyses the reaction a ribonucleoside 5'-diphosphate + ATP = a ribonucleoside 5'-triphosphate + ADP. Its function is as follows. Major role in the synthesis of nucleoside triphosphates other than ATP. The ATP gamma phosphate is transferred to the NDP beta phosphate via a ping-pong mechanism, using a phosphorylated active-site intermediate. The chain is Nucleoside diphosphate kinase from Heliobacterium modesticaldum (strain ATCC 51547 / Ice1).